The chain runs to 694 residues: MATLAYSIEVEGLEDETLVVRGFHGQESLSNSVFLGQACYGFRYQMQLASRVSNLTADQMVDKRAELKLYRNSQLVQRVHGIVRAFSQGDIGHHHTFYQLTLVPALERLSLRHNSRIFQKQTVPEILSILLQEMGIHDYAFALKRDCVQREFCVQYRESDIDFLHRLAAEEGLVYSFVHEAGKHTLYFSDASDSLSKLPEPIPYNALAGGTMDTPYIHGLTYRTQAEVSEVQLKDYSFKKPAYSFLQTVQGTELDYQQTRYQHFDAPGRYKDDVNGAAFSQIRLDYLRRHAHTATGQSNEPLLRAGYKFDLQEHLDPAMNRDWVVVSINHQGEQPQALQEEGGSGATTYNNQFSLIPGHLHWRAEPQPKPQVDGPMIATVVGPEGEEIFCDEHGRVKIHFPWDRYSNGNEQSSCWVRVSQGWAGSQYGFIAIPRIGHEVIVSFLNGDPDQPIITGRTYHATNTPPYTLPEHKTKTVLRTETHQGEGFNELSFEDQAGKEQIYLHAQKDFDGLIENDHTTVIRHDQHLTVENDQFTQIKHNQHLTVEGESRTLVKLDCSSEIGGSLQQKIGSKAIYDAGTEVHLKAGNKLVLEAGNELTIKAGGSFIKVDAGGVHVVGSAINLNSGGSAGSGSGYGGKMAELPQGVDKAKTPQEIELAAVTPTQQSMSPLLKARQIEALKGPAPVCEVCEEAKGN.

It belongs to the VgrG protein family.

It localises to the secreted. In terms of biological role, part of the type VI secretion system specialized secretion system, which delivers several virulence factors in both prokaryotic and eukaryotic cells during infection. Forms the spike at the tip of the elongating tube formed by haemolysin co-regulated protein Hcp. Allows the delivery of the VasX antibacterial toxin to target cells where it exerts its toxicity. In Vibrio cholerae serotype O1 (strain ATCC 39315 / El Tor Inaba N16961), this protein is Type VI secretion system spike protein VgrG2 (vgrG2).